We begin with the raw amino-acid sequence, 463 residues long: ATP synthase subunit beta (463 aa).

152–159 provides a ligand contact to ATP; the sequence is GGAGVGKT.

Belongs to the ATPase alpha/beta chains family. In terms of assembly, F-type ATPases have 2 components, CF(1) - the catalytic core - and CF(0) - the membrane proton channel. CF(1) has five subunits: alpha(3), beta(3), gamma(1), delta(1), epsilon(1). CF(0) has three main subunits: a(1), b(2) and c(9-12). The alpha and beta chains form an alternating ring which encloses part of the gamma chain. CF(1) is attached to CF(0) by a central stalk formed by the gamma and epsilon chains, while a peripheral stalk is formed by the delta and b chains.

Its subcellular location is the cell membrane. The enzyme catalyses ATP + H2O + 4 H(+)(in) = ADP + phosphate + 5 H(+)(out). Produces ATP from ADP in the presence of a proton gradient across the membrane. The catalytic sites are hosted primarily by the beta subunits. This chain is ATP synthase subunit beta, found in Clostridium botulinum (strain Alaska E43 / Type E3).